Here is a 1465-residue protein sequence, read N- to C-terminus: DNA polymerase III PolC-type (1465 aa).

In terms of domain architecture, Exonuclease spans 427–583 (YVVFDVETTG…YDAEATGRLL (157 aa)).

This sequence belongs to the DNA polymerase type-C family. PolC subfamily.

The protein resides in the cytoplasm. The enzyme catalyses DNA(n) + a 2'-deoxyribonucleoside 5'-triphosphate = DNA(n+1) + diphosphate. In terms of biological role, required for replicative DNA synthesis. This DNA polymerase also exhibits 3' to 5' exonuclease activity. The polypeptide is DNA polymerase III PolC-type (Streptococcus pyogenes serotype M4 (strain MGAS10750)).